We begin with the raw amino-acid sequence, 262 residues long: Transmembrane protein 270 (262 aa).

Transmembrane regions (helical) follow at residues 6–26, 30–50, 67–87, 92–112, and 127–147; these read LVRSSLSGTLLVVVKLSALLI, AHLYNFLLLKIFLFNHWLLGL, PVGRVLWAGLTLLEVPVCLAL, LVWAGLLGCARALGLGPKWLG, and LFLSCLHSLMLAALLLLLLVW. The interval 226-262 is disordered; it reads QEAEPQKALGLSSETPPPGPPAPGARPVLPEPGTPGE. The segment covering 240–262 has biased composition (pro residues); sequence TPPPGPPAPGARPVLPEPGTPGE.

Its subcellular location is the membrane. This is Transmembrane protein 270 from Bos taurus (Bovine).